Reading from the N-terminus, the 536-residue chain is 1,4-beta-D-glucan cellobiohydrolase B (536 aa).

An N-terminal signal peptide occupies residues 1-21 (MSSFQIYRAALLLSILATANA). The catalytic stretch occupies residues 22–458 (QQVGTYTTET…SNIKFGPIGS (437 aa)). Residue E233 is the Nucleophile of the active site. E238 (proton donor) is an active-site residue. N351 and N414 each carry an N-linked (GlcNAc...) asparagine glycan. The ser/Thr-rich linker stretch occupies residues 459–500 (TYSSGSSSGSGSSSSSSSTTTKATSTTLKTTSTTSSGSSSTS). The tract at residues 464–499 (SSSGSGSSSSSSSTTTKATSTTLKTTSTTSSGSSST) is disordered. The CBM1 domain maps to 500–536 (SAAQAYGQCGGQGWTGPTTCVSGYTCTYENAYYSQCL). Disulfide bonds link C508/C525 and C519/C535.

This sequence belongs to the glycosyl hydrolase 7 (cellulase C) family.

It is found in the secreted. It catalyses the reaction Hydrolysis of (1-&gt;4)-beta-D-glucosidic linkages in cellulose and cellotetraose, releasing cellobiose from the non-reducing ends of the chains.. Its function is as follows. The biological conversion of cellulose to glucose generally requires three types of hydrolytic enzymes: (1) Endoglucanases which cut internal beta-1,4-glucosidic bonds; (2) Exocellobiohydrolases that cut the disaccharide cellobiose from the non-reducing end of the cellulose polymer chain; (3) Beta-1,4-glucosidases which hydrolyze the cellobiose and other short cello-oligosaccharides to glucose. This is 1,4-beta-D-glucan cellobiohydrolase B (cbhB) from Aspergillus niger.